Here is a 216-residue protein sequence, read N- to C-terminus: tRNA (guanine-N(7)-)-methyltransferase (216 aa).

Residues Glu-44, Glu-69, Asn-97, and Asp-119 each contribute to the S-adenosyl-L-methionine site. Residue Asp-119 is part of the active site. Residues Lys-123, Asp-155, and 192–195 (TEYE) each bind substrate.

It belongs to the class I-like SAM-binding methyltransferase superfamily. TrmB family.

The catalysed reaction is guanosine(46) in tRNA + S-adenosyl-L-methionine = N(7)-methylguanosine(46) in tRNA + S-adenosyl-L-homocysteine. It functions in the pathway tRNA modification; N(7)-methylguanine-tRNA biosynthesis. Functionally, catalyzes the formation of N(7)-methylguanine at position 46 (m7G46) in tRNA. This chain is tRNA (guanine-N(7)-)-methyltransferase, found in Lysinibacillus sphaericus (strain C3-41).